Here is a 924-residue protein sequence, read N- to C-terminus: Aminopeptidase 2 (924 aa).

The signal sequence occupies residues 1-45 (MASNNTSQRSGFSSFFCRLKTYFCNHFLCLFVLSFFPLSFRRLCL). Positions 46 to 57 (LCHLCEKSNLWL) are excised as a propeptide. Position 58 is an N-acetylserine; partial (serine 58). Asparagine 92 is a glycosylation site (N-linked (GlcNAc...) asparagine). Residue glutamate 194 coordinates substrate. Residue asparagine 229 is glycosylated (N-linked (GlcNAc...) asparagine). 327–331 (GAMEN) contributes to the substrate binding site. Residue histidine 363 participates in Zn(2+) binding. Glutamate 364 serves as the catalytic Proton acceptor. Zn(2+)-binding residues include histidine 367 and glutamate 386.

Belongs to the peptidase M1 family. Zn(2+) serves as cofactor.

It is found in the secreted. The protein resides in the cell wall. Its activity is regulated as follows. Inactivated by metal-chelating agents phenanthroline and EDTA. Inhibited by bestatin, an aminopeptidase inhibitor. Not inhibited by pepstatin A and PMSF, inhibitors of aspartic and the serine proteases, respectively. Not inhibited by carboxypeptidase inhibitor. In terms of biological role, metalloprotease that specifically hydrolyzes peptides with N-terminal alanine, arginine and leucine residues. This chain is Aminopeptidase 2 (APE2), found in Candida albicans (strain SC5314 / ATCC MYA-2876) (Yeast).